An 856-amino-acid chain; its full sequence is Leucine--tRNA ligase (856 aa).

The 'HIGH' region signature appears at 42–52 (PYPSGNLHMGH). The short motif at 617-621 (KMSKS) is the 'KMSKS' region element. Lys-620 is a binding site for ATP.

Belongs to the class-I aminoacyl-tRNA synthetase family.

The protein resides in the cytoplasm. It catalyses the reaction tRNA(Leu) + L-leucine + ATP = L-leucyl-tRNA(Leu) + AMP + diphosphate. The polypeptide is Leucine--tRNA ligase (Rippkaea orientalis (strain PCC 8801 / RF-1) (Cyanothece sp. (strain PCC 8801))).